Here is a 194-residue protein sequence, read N- to C-terminus: Fe/S biogenesis protein NfuA (194 aa).

Residues cysteine 151 and cysteine 154 each coordinate [4Fe-4S] cluster.

Belongs to the NfuA family. As to quaternary structure, homodimer. The cofactor is [4Fe-4S] cluster.

Its function is as follows. Involved in iron-sulfur cluster biogenesis. Binds a 4Fe-4S cluster, can transfer this cluster to apoproteins, and thereby intervenes in the maturation of Fe/S proteins. Could also act as a scaffold/chaperone for damaged Fe/S proteins. In Mannheimia succiniciproducens (strain KCTC 0769BP / MBEL55E), this protein is Fe/S biogenesis protein NfuA.